The following is a 38-amino-acid chain: Mating hormone A-factor 2 (38 aa).

Positions 1-12 are enriched in polar residues; it reads MQPITTASTQAT. Residues 1–20 form a disordered region; sequence MQPITTASTQATQKDKSSEK. Residues 1 to 23 constitute a propeptide that is removed on maturation; it reads MQPITTASTQATQKDKSSEKKDN. C35 carries the post-translational modification Cysteine methyl ester. A lipid anchor (S-farnesyl cysteine) is attached at C35. Positions 36–38 are cleaved as a propeptide — removed in mature form; the sequence is VIA.

It localises to the cell membrane. Functionally, the active factor is excreted into the culture medium by haploid cells of the A mating type and acts on cells of the opposite mating type (type alpha). It mediates the conjugation process between the two types by inhibiting the initiation of DNA synthesis in type alpha cells and synchronizing them with type A. The polypeptide is Mating hormone A-factor 2 (MFA2) (Saccharomyces cerevisiae (strain ATCC 204508 / S288c) (Baker's yeast)).